Reading from the N-terminus, the 886-residue chain is cytokinesis protein 3 (886 aa).

Residues 6–67 (QLPCMVRALY…PSNFVHCLDI (62 aa)) form the SH3 domain. Positions 72 to 88 (PGSSMSRTSASSFRYSS) are enriched in low complexity. A disordered region spans residues 72–189 (PGSSMSRTSA…DLSRSTPSPL (118 aa)). The span at 89 to 104 (PQKSSIDTPITSSDQG) shows a compositional bias: polar residues. The span at 135–154 (LNSLGSSLSLKKSVSRPPSS) shows a compositional bias: low complexity. The segment covering 155 to 188 (MSRTNLDVSSRWDNTADNDSQIDAQDLSRSTPSP) has biased composition (polar residues). Serine 213 is subject to Phosphoserine. Disordered regions lie at residues 219 to 290 (TKST…SPSD) and 358 to 393 (RRGS…SPHT). Polar residues predominate over residues 253 to 264 (DNSSKPRTSLQP).

Belongs to the CYK3 family.

It is found in the cell tip. In terms of biological role, involved in cytokinesis. The protein is cytokinesis protein 3 (cyk3) of Schizosaccharomyces pombe (strain 972 / ATCC 24843) (Fission yeast).